The following is a 602-amino-acid chain: Glutamine--fructose-6-phosphate aminotransferase [isomerizing] (602 aa).

Catalysis depends on Cys-2, which acts as the Nucleophile; for GATase activity. The region spanning 2–217 is the Glutamine amidotransferase type-2 domain; sequence CGIVGVVGNT…DQELVIVKAD (216 aa). Positions 67–87 are disordered; it reads IGHTRWATHGKPTEDNAHPHR. Residues 77-87 are compositionally biased toward basic and acidic residues; that stretch reads KPTEDNAHPHR. SIS domains lie at 283 to 422 and 455 to 592; these read IIKA…ANGN and VREL…VDKP. The For Fru-6P isomerization activity role is filled by Lys-597.

As to quaternary structure, homodimer.

The protein resides in the cytoplasm. It catalyses the reaction D-fructose 6-phosphate + L-glutamine = D-glucosamine 6-phosphate + L-glutamate. Functionally, catalyzes the first step in hexosamine metabolism, converting fructose-6P into glucosamine-6P using glutamine as a nitrogen source. The protein is Glutamine--fructose-6-phosphate aminotransferase [isomerizing] of Streptococcus pneumoniae serotype 4 (strain ATCC BAA-334 / TIGR4).